The following is a 288-amino-acid chain: Oxaloacetate decarboxylase (288 aa).

Residue serine 47 participates in substrate binding. A Mg(2+)-binding site is contributed by aspartate 85. Substrate contacts are provided by arginine 156 and histidine 232.

Belongs to the isocitrate lyase/PEP mutase superfamily. Oxaloacetate decarboxylase family. Homotetramer; dimer of dimers. Mg(2+) serves as cofactor.

It carries out the reaction oxaloacetate + H(+) = pyruvate + CO2. Its function is as follows. Catalyzes the decarboxylation of oxaloacetate into pyruvate. Seems to play a role in maintaining cellular concentrations of bicarbonate and pyruvate. This is Oxaloacetate decarboxylase from Rhodopseudomonas palustris (strain ATCC BAA-98 / CGA009).